A 201-amino-acid chain; its full sequence is Oligoribonuclease (201 aa).

The Exonuclease domain occupies 20–183 (LVWLDMEMTG…ADIHESIDEL (164 aa)). The active site involves Tyr141.

This sequence belongs to the oligoribonuclease family.

It is found in the cytoplasm. In terms of biological role, 3'-to-5' exoribonuclease specific for small oligoribonucleotides. This chain is Oligoribonuclease, found in Burkholderia mallei (strain NCTC 10229).